Consider the following 448-residue polypeptide: Ribosomal protein uS12 methylthiotransferase RimO (448 aa).

An MTTase N-terminal domain is found at 16 to 126 (PRISFVSLGC…VVAAVHEAVP (111 aa)). 6 residues coordinate [4Fe-4S] cluster: Cys25, Cys61, Cys90, Cys157, Cys161, and Cys164. A Radical SAM core domain is found at 143–380 (LTPRHYAYLK…MEAQSHVSLR (238 aa)). The TRAM domain maps to 383–448 (RAKVGKRLSV…DAYDLHGIAV (66 aa)).

It belongs to the methylthiotransferase family. RimO subfamily. The cofactor is [4Fe-4S] cluster.

It localises to the cytoplasm. It carries out the reaction L-aspartate(89)-[ribosomal protein uS12]-hydrogen + (sulfur carrier)-SH + AH2 + 2 S-adenosyl-L-methionine = 3-methylsulfanyl-L-aspartate(89)-[ribosomal protein uS12]-hydrogen + (sulfur carrier)-H + 5'-deoxyadenosine + L-methionine + A + S-adenosyl-L-homocysteine + 2 H(+). Catalyzes the methylthiolation of an aspartic acid residue of ribosomal protein uS12. The chain is Ribosomal protein uS12 methylthiotransferase RimO from Methylorubrum extorquens (strain PA1) (Methylobacterium extorquens).